The primary structure comprises 261 residues: MARIALGIRYDGSAYHGWQVQEALKTVQGEVEKALSAVANHPVFVTCAGRTDAGVHASAQVAHFDTTAYRSDHAWVFGANSNLPHDISILWAKAVEEDFHARYSAMARRYRYIVYNHEIRPAILRKAIGWHYRPLDEKRMQAGAQYLIGEHDFSSFQGAGCQSRTPVRKIFQIEIYRIRRMVVIEVQANAFLLHMVRNIAGVLIAIGSGEKHPDWAQTVLKAKDRRQGGVTVPPNGLYLVEVNYPPNFKLPRMPLGPFFLP.

Catalysis depends on Asp52, which acts as the Nucleophile. Tyr110 is a binding site for substrate.

The protein belongs to the tRNA pseudouridine synthase TruA family. Homodimer.

It carries out the reaction uridine(38/39/40) in tRNA = pseudouridine(38/39/40) in tRNA. Functionally, formation of pseudouridine at positions 38, 39 and 40 in the anticodon stem and loop of transfer RNAs. This is tRNA pseudouridine synthase A from Coxiella burnetii (strain CbuK_Q154) (Coxiella burnetii (strain Q154)).